The sequence spans 146 residues: Putative phosphotransferase enzyme IIA component YadI (146 aa).

Residues 1–124 (MLGWVITCHD…RIVELGAPEV (124 aa)) enclose the PTS EIIA type-4 domain. Catalysis depends on His9, which acts as the Tele-phosphohistidine intermediate.

Its subcellular location is the cytoplasm. Functionally, the phosphoenolpyruvate-dependent sugar phosphotransferase system (sugar PTS), a major carbohydrate active -transport system, catalyzes the phosphorylation of incoming sugar substrates concomitantly with their translocation across the cell membrane. This Escherichia coli (strain K12) protein is Putative phosphotransferase enzyme IIA component YadI (yadI).